A 388-amino-acid polypeptide reads, in one-letter code: Formate-dependent phosphoribosylglycinamide formyltransferase (388 aa).

Residues 20-21 (EL) and E80 contribute to the N(1)-(5-phospho-beta-D-ribosyl)glycinamide site. ATP contacts are provided by residues R112, K153, 158-163 (SSGKGQ), 193-196 (EEFI), and E201. The region spanning 117–306 (RLAFEKLGLR…EFEIHARAIL (190 aa)) is the ATP-grasp domain. Mg(2+) is bound by residues E265 and E277. N(1)-(5-phospho-beta-D-ribosyl)glycinamide contacts are provided by residues D284, K352, and 359–360 (RR).

Belongs to the PurK/PurT family. As to quaternary structure, homodimer.

It carries out the reaction N(1)-(5-phospho-beta-D-ribosyl)glycinamide + formate + ATP = N(2)-formyl-N(1)-(5-phospho-beta-D-ribosyl)glycinamide + ADP + phosphate + H(+). The protein operates within purine metabolism; IMP biosynthesis via de novo pathway; N(2)-formyl-N(1)-(5-phospho-D-ribosyl)glycinamide from N(1)-(5-phospho-D-ribosyl)glycinamide (formate route): step 1/1. In terms of biological role, involved in the de novo purine biosynthesis. Catalyzes the transfer of formate to 5-phospho-ribosyl-glycinamide (GAR), producing 5-phospho-ribosyl-N-formylglycinamide (FGAR). Formate is provided by PurU via hydrolysis of 10-formyl-tetrahydrofolate. This is Formate-dependent phosphoribosylglycinamide formyltransferase from Methanococcus maripaludis (strain C7 / ATCC BAA-1331).